We begin with the raw amino-acid sequence, 482 residues long: C3a anaphylatoxin chemotactic receptor (482 aa).

The Extracellular segment spans residues 1 to 23 (MASFSAETNSTDLLSQPWNEPPV). N-linked (GlcNAc...) asparagine glycosylation is present at N9. Residues 24 to 46 (ILSMVILSLTFLLGLPGNGLVLW) traverse the membrane as a helical segment. Over 47–57 (VAGLKMQRTVN) the chain is Cytoplasmic. A helical transmembrane segment spans residues 58 to 80 (TVWFLHLTLADLLCCLSLPFSLA). Residues 81–96 (HLALQGQWPYGRFLCE) lie on the Extracellular side of the membrane. A disulfide bond links C95 and C172. Residues 97-118 (LIPSIIVLNMFASVFLLTAISL) form a helical membrane-spanning segment. At 119 to 139 (DRCLVVFKPIWCQNHRNVGTA) the chain is on the cytoplasmic side. The chain crosses the membrane as a helical span at residues 140 to 160 (CSICGCIWVVAFVMCIPVFVY). Residues 161–340 (REIFTADNHN…TPLVAITITR (180 aa)) lie on the Extracellular side of the membrane. Sulfotyrosine is present on residues Y174 and Y184. A glycan (N-linked (GlcNAc...) asparagine) is linked at N194. Sulfotyrosine is present on Y318. Residues 341-360 (LVVGFLLPSVIMIACYSFIV) traverse the membrane as a helical segment. The Cytoplasmic portion of the chain corresponds to 361–377 (FRMQRGRFAKSQSKTFR). A helical transmembrane segment spans residues 378 to 400 (VAVVVVAVFLVCWTPYHIFGVLS). Topologically, residues 401–417 (LLIDPESPLGKTLMSWD) are extracellular. The helical transmembrane segment at 418–438 (HVSIALASANSCFNPFLYALL) threads the bilayer. The Cytoplasmic portion of the chain corresponds to 439–482 (GKDFRKKARQSIQGILEAAFSEELTRSTHCNSNNVFSERNSTTV). S459 carries the post-translational modification Phosphoserine. A Phosphothreonine modification is found at T463.

Belongs to the G-protein coupled receptor 1 family. In terms of assembly, interacts with VGF-derived peptide TLQP-21. In terms of processing, among the sulfation sites Tyr-174 is essential for binding of C3a anaphylatoxin.

Its subcellular location is the cell membrane. In terms of biological role, receptor for the chemotactic and inflammatory peptide anaphylatoxin C3a. This receptor stimulates chemotaxis, granule enzyme release and superoxide anion production. The polypeptide is C3a anaphylatoxin chemotactic receptor (C3AR1) (Pongo abelii (Sumatran orangutan)).